Reading from the N-terminus, the 92-residue chain is Probable Fe(2+)-trafficking protein (92 aa).

The protein belongs to the Fe(2+)-trafficking protein family.

In terms of biological role, could be a mediator in iron transactions between iron acquisition and iron-requiring processes, such as synthesis and/or repair of Fe-S clusters in biosynthetic enzymes. The protein is Probable Fe(2+)-trafficking protein of Shewanella loihica (strain ATCC BAA-1088 / PV-4).